The following is an 852-amino-acid chain: Bifunctional uridylyltransferase/uridylyl-removing enzyme (852 aa).

The interval 1–318 (MPENLSSALE…STPMRVTLRI (318 aa)) is uridylyltransferase. The uridylyl-removing stretch occupies residues 319–672 (DDDYIQVNNQ…SRILPQSDSF (354 aa)). Positions 436–558 (VDDHILAVVR…VQTHERLSAL (123 aa)) constitute an HD domain. ACT domains are found at residues 673 to 757 (QVMV…SCNR) and 785 to 852 (SVEI…EQLA).

Belongs to the GlnD family. The cofactor is Mg(2+).

It carries out the reaction [protein-PII]-L-tyrosine + UTP = [protein-PII]-uridylyl-L-tyrosine + diphosphate. It catalyses the reaction [protein-PII]-uridylyl-L-tyrosine + H2O = [protein-PII]-L-tyrosine + UMP + H(+). Uridylyltransferase (UTase) activity is inhibited by glutamine, while glutamine activates uridylyl-removing (UR) activity. Modifies, by uridylylation and deuridylylation, the PII regulatory proteins (GlnB and homologs), in response to the nitrogen status of the cell that GlnD senses through the glutamine level. Under low glutamine levels, catalyzes the conversion of the PII proteins and UTP to PII-UMP and PPi, while under higher glutamine levels, GlnD hydrolyzes PII-UMP to PII and UMP (deuridylylation). Thus, controls uridylylation state and activity of the PII proteins, and plays an important role in the regulation of nitrogen assimilation and metabolism. This Neisseria gonorrhoeae (strain NCCP11945) protein is Bifunctional uridylyltransferase/uridylyl-removing enzyme.